The following is a 158-amino-acid chain: 6,7-dimethyl-8-ribityllumazine synthase (158 aa).

5-amino-6-(D-ribitylamino)uracil contacts are provided by residues tryptophan 27, serine 58–glutamate 60, and valine 81–isoleucine 83. Glycine 86 to threonine 87 is a (2S)-2-hydroxy-3-oxobutyl phosphate binding site. Histidine 89 functions as the Proton donor in the catalytic mechanism. Residue phenylalanine 114 participates in 5-amino-6-(D-ribitylamino)uracil binding. Arginine 128 contributes to the (2S)-2-hydroxy-3-oxobutyl phosphate binding site.

It belongs to the DMRL synthase family.

The enzyme catalyses (2S)-2-hydroxy-3-oxobutyl phosphate + 5-amino-6-(D-ribitylamino)uracil = 6,7-dimethyl-8-(1-D-ribityl)lumazine + phosphate + 2 H2O + H(+). It functions in the pathway cofactor biosynthesis; riboflavin biosynthesis; riboflavin from 2-hydroxy-3-oxobutyl phosphate and 5-amino-6-(D-ribitylamino)uracil: step 1/2. Its function is as follows. Catalyzes the formation of 6,7-dimethyl-8-ribityllumazine by condensation of 5-amino-6-(D-ribitylamino)uracil with 3,4-dihydroxy-2-butanone 4-phosphate. This is the penultimate step in the biosynthesis of riboflavin. This Leifsonia xyli subsp. xyli (strain CTCB07) protein is 6,7-dimethyl-8-ribityllumazine synthase.